The primary structure comprises 375 residues: DNA replication and repair protein RecF (375 aa).

An ATP-binding site is contributed by Gly30–Thr37.

It belongs to the RecF family.

It is found in the cytoplasm. Functionally, the RecF protein is involved in DNA metabolism; it is required for DNA replication and normal SOS inducibility. RecF binds preferentially to single-stranded, linear DNA. It also seems to bind ATP. The sequence is that of DNA replication and repair protein RecF from Bacillus cereus (strain ZK / E33L).